Consider the following 310-residue polypeptide: Homeobox protein knotted-1-like 2 (310 aa).

Residues 178–208 (SDDGAVSSDEELREDDDIAADDSQQRSNDRD) form a disordered region. Residues 185–197 (SDEELREDDDIAA) are compositionally biased toward acidic residues. Residues 208 to 228 (DLKDQLLRKFGSHISSLKLEF) form the ELK domain. The segment at residues 229-292 (SKKKKKGKLP…NQRKRHWKPS (64 aa)) is a DNA-binding region (homeobox; TALE-type).

Belongs to the TALE/KNOX homeobox family. In terms of assembly, may form heterodimeric complex with the TALE/BELL protein BEL1, BLH1 and BLH2. Interacts with OFP12 and OFP14. Interacts with BZIP30. In terms of tissue distribution, expressed predominantly in shoot apices of seedlings, in the receptacle and developing pistil of flowers and in axillary buds of inflorescence stems.

Its subcellular location is the nucleus. In terms of biological role, may play a role in meristem function, and may be involved in maintaining cells in an undifferentiated, meristematic state. Probably binds to the DNA sequence 5'-TGAC-3'. The protein is Homeobox protein knotted-1-like 2 (KNAT2) of Arabidopsis thaliana (Mouse-ear cress).